The primary structure comprises 697 residues: SPX domain-containing membrane protein OsI_08463 (697 aa).

In terms of domain architecture, SPX spans 2–145 (VNFGKRLMAD…GYKFTDYYVS (144 aa)). 11 helical membrane passes run 247-267 (FMSL…TYII), 278-298 (LGAA…AQVF), 315-335 (LVFS…AYDV), 338-356 (LTVL…ARAV), 375-395 (AGFV…AGLL), 411-431 (LPGW…WISF), 513-533 (LLIY…SSVV), 544-564 (TVAM…VIVG), 576-596 (ILVA…RFTS), 604-624 (VSSA…NLSL), and 670-690 (LLNV…VATF).

It belongs to the major facilitator superfamily.

The protein localises to the membrane. This is SPX domain-containing membrane protein OsI_08463 from Oryza sativa subsp. indica (Rice).